A 221-amino-acid chain; its full sequence is uncharacterized protein (221 aa).

4 helical membrane-spanning segments follow: residues 30–50 (FGIFLALSIEFIPAEVVLPLA), 62–82 (AGVVLAGSLGGVAGPLTLYWI), 144–164 (VWVFSLYTFIAMLPITFVYVY), and 179–199 (ILDQYMLPIGIAILALFLLYL).

Belongs to the DedA family.

The protein localises to the cell membrane. This is an uncharacterized protein from Bacillus subtilis (strain 168).